The following is a 230-amino-acid chain: Uracil-DNA glycosylase (230 aa).

Residue Asp-70 is the Proton acceptor of the active site.

Belongs to the uracil-DNA glycosylase (UDG) superfamily. UNG family.

It localises to the cytoplasm. It carries out the reaction Hydrolyzes single-stranded DNA or mismatched double-stranded DNA and polynucleotides, releasing free uracil.. Excises uracil residues from the DNA which can arise as a result of misincorporation of dUMP residues by DNA polymerase or due to deamination of cytosine. This chain is Uracil-DNA glycosylase, found in Pseudomonas syringae pv. syringae (strain B728a).